A 243-amino-acid polypeptide reads, in one-letter code: Small ribosomal subunit protein uS2c (243 aa).

The protein belongs to the universal ribosomal protein uS2 family.

The protein localises to the plastid. The protein resides in the chloroplast. This Cyanidium caldarium (Red alga) protein is Small ribosomal subunit protein uS2c (rps2).